Consider the following 610-residue polypeptide: Aspartate--tRNA(Asp/Asn) ligase (610 aa).

Residue E182 coordinates L-aspartate. The interval 206-209 (QLFK) is aspartate. L-aspartate is bound at residue R228. ATP-binding positions include 228–230 (RDE) and Q237. An L-aspartate-binding site is contributed by H470. Residue E506 coordinates ATP. Residue R513 coordinates L-aspartate. ATP is bound at residue 558 to 561 (GLDR).

It belongs to the class-II aminoacyl-tRNA synthetase family. Type 1 subfamily. Homodimer.

It localises to the cytoplasm. The catalysed reaction is tRNA(Asx) + L-aspartate + ATP = L-aspartyl-tRNA(Asx) + AMP + diphosphate. Aspartyl-tRNA synthetase with relaxed tRNA specificity since it is able to aspartylate not only its cognate tRNA(Asp) but also tRNA(Asn). Reaction proceeds in two steps: L-aspartate is first activated by ATP to form Asp-AMP and then transferred to the acceptor end of tRNA(Asp/Asn). This is Aspartate--tRNA(Asp/Asn) ligase from Acidobacterium capsulatum (strain ATCC 51196 / DSM 11244 / BCRC 80197 / JCM 7670 / NBRC 15755 / NCIMB 13165 / 161).